The sequence spans 425 residues: Lysosome-associated membrane glycoprotein 2 (425 aa).

The first 27 residues, 1-27 (MAPPRCPAGLALLLLLLGACGFFQSYA), serve as a signal peptide directing secretion. The tract at residues 28-192 (VEVDVKDASN…SKKESRCYAD (165 aa)) is first lumenal domain. Residues 28-389 (VEVDVKDASN…EECFADSDLN (362 aa)) are Lumenal-facing. N37, N56, N62, N74, N100, N105, N120, N163, N170, N179, N206, N232, N239, N252, N276, N287, N298, N312, N320, and N331 each carry an N-linked (GlcNAc...) asparagine glycan. The cysteines at positions 40 and 78 are disulfide-linked. A disulfide bridge connects residues C153 and C189. A hinge region spans residues 193–238 (TPTAAPTVLPTVANVTTASTTISPAPTTAPKPAENPVTGNYSLKTG). A second lumenal domain region spans residues 239–390 (NKTCLLATVG…ECFADSDLNF (152 aa)). Cysteines 242 and 274 form a disulfide. Cysteines 345 and 382 form a disulfide. Residues 390–414 (FLIPVAVGMALGFLIILVFISYIIG) form a helical membrane-spanning segment. Residues 415 to 425 (RRKSRTGYQSV) lie on the Cytoplasmic side of the membrane. An important for binding and subsequent lysosomal degradation of target proteins region spans residues 416-419 (RKSR).

It belongs to the LAMP family. In terms of assembly, monomer. Forms large homooligomers. In terms of processing, extensively N-glycosylated. Contains a minor proportion of O-linked glycans.

Its subcellular location is the lysosome membrane. It localises to the endosome membrane. The protein localises to the cell membrane. The protein resides in the cytoplasmic vesicle. It is found in the autophagosome membrane. In terms of biological role, lysosomal membrane glycoprotein which plays an important role in lysosome biogenesis, lysosomal pH regulation and autophagy. Plays an important role in chaperone-mediated autophagy, a process that mediates lysosomal degradation of proteins in response to various stresses and as part of the normal turnover of proteins with a long biological half-live. In the chaperone-mediated autophagy, acts downstream of chaperones, such as HSPA8/HSC70, which recognize and bind substrate proteins and mediate their recruitment to lysosomes, where target proteins bind LAMP2. Plays a role in lysosomal protein degradation in response to starvation. Required for the fusion of autophagosomes with lysosomes during autophagy. This is Lysosome-associated membrane glycoprotein 2 (LAMP2) from Gallus gallus (Chicken).